The chain runs to 255 residues: Triosephosphate isomerase (255 aa).

A substrate-binding site is contributed by 9–11 (NWK). The Electrophile role is filled by His-95. The Proton acceptor role is filled by Glu-167. Substrate is bound by residues Gly-173, Ser-212, and 233 to 234 (GG).

It belongs to the triosephosphate isomerase family. Homodimer.

It is found in the cytoplasm. The enzyme catalyses D-glyceraldehyde 3-phosphate = dihydroxyacetone phosphate. The protein operates within carbohydrate biosynthesis; gluconeogenesis. It participates in carbohydrate degradation; glycolysis; D-glyceraldehyde 3-phosphate from glycerone phosphate: step 1/1. Its function is as follows. Involved in the gluconeogenesis. Catalyzes stereospecifically the conversion of dihydroxyacetone phosphate (DHAP) to D-glyceraldehyde-3-phosphate (G3P). The protein is Triosephosphate isomerase of Enterobacter cloacae.